The chain runs to 326 residues: Malate dehydrogenase (326 aa).

Position 11 to 17 (11 to 17 (GAAGQIG)) interacts with NAD(+). Arg92 and Arg98 together coordinate substrate. NAD(+) is bound by residues Asn105, Gln112, and 129-131 (VGN). 2 residues coordinate substrate: Asn131 and Arg162. The active-site Proton acceptor is His187.

This sequence belongs to the LDH/MDH superfamily. MDH type 2 family.

It catalyses the reaction (S)-malate + NAD(+) = oxaloacetate + NADH + H(+). In terms of biological role, catalyzes the reversible oxidation of malate to oxaloacetate. The sequence is that of Malate dehydrogenase from Leptospira interrogans serogroup Icterohaemorrhagiae serovar Lai (strain 56601).